The chain runs to 109 residues: C-X-C motif chemokine 13 (109 aa).

The first 22 residues, 1–22 (MKFISTSLLLMLLVSSLSPVQG), serve as a signal peptide directing secretion. 2 disulfide bridges follow: cysteine 33-cysteine 60 and cysteine 35-cysteine 76.

Belongs to the intercrine alpha (chemokine CxC) family. Highest levels in liver, followed by spleen, lymph node, appendix and stomach. Low levels in salivary gland, mammary gland and fetal spleen.

The protein resides in the secreted. Its function is as follows. Chemotactic for B-lymphocytes but not for T-lymphocytes, monocytes and neutrophils. Does not induce calcium release in B-lymphocytes. Binds to BLR1/CXCR5. This chain is C-X-C motif chemokine 13 (CXCL13), found in Homo sapiens (Human).